The primary structure comprises 463 residues: DDB1- and CUL4-associated factor 12-like protein 1 (463 aa).

A disordered region spans residues 1–35 (MAQQQTGSRKRKAPAVEADAESSPSQGLAAADGEG). WD repeat units follow at residues 87–137 (LTER…PLLR), 138–184 (DSEA…SLDP), 185–252 (LCLG…DVEA), 253–297 (IPRA…ALSR), 298–341 (LLSI…QQNI), and 342–376 (RPLC…LFYD).

Belongs to the WD repeat DCAF12 family.

This is DDB1- and CUL4-associated factor 12-like protein 1 (DCAF12L1) from Homo sapiens (Human).